The sequence spans 304 residues: PTB domain-containing engulfment adapter protein 1 (304 aa).

Thr-16 is subject to Phosphothreonine. In terms of domain architecture, PID spans 21–176; that stretch reads SKHFIPYNAK…AGLQKRIQDL (156 aa). Residues 158–202 are a coiled coil; it reads KDVETRKQIAGLQKRIQDLETENMELKNKVQDLENQLRITQVSAP. Ser-223 carries the post-translational modification Phosphoserine. The interval 223-246 is disordered; sequence SPISHQSSMPTRNGTQPPPVPSRS. Positions 225 to 237 are enriched in polar residues; the sequence is ISHQSSMPTRNGT.

Belongs to the ced-6 family. As to quaternary structure, homodimer. Interacts with clathrin. Interacts with GDP-bound ARF6, but not with GTP-bound ARF6. Part of a complex composed of GULP1, ACAP1 and ARF6. Interacts with ACAP1, LRP1, MEGF10 and STAB2. As to expression, widely expressed. Detected in macrophages, pancreas, kidney, skeletal muscle, heart, colon, intestine, lung, placenta and ovary.

It localises to the cytoplasm. May function as an adapter protein. Required for efficient phagocytosis of apoptotic cells. Modulates cellular glycosphingolipid and cholesterol transport. May play a role in the internalization and endosomal trafficking of various LRP1 ligands, such as PSAP. Increases cellular levels of GTP-bound ARF6. The polypeptide is PTB domain-containing engulfment adapter protein 1 (GULP1) (Homo sapiens (Human)).